Consider the following 125-residue polypeptide: Putative RNA polymerase sigma-G factor (125 aa).

Belongs to the sigma-70 factor family.

Functionally, sigma factors are initiation factors that promote the attachment of RNA polymerase to specific initiation sites and are then released. The chain is Putative RNA polymerase sigma-G factor from Bacillus thuringiensis subsp. kurstaki.